The chain runs to 271 residues: Proteasome inhibitor PI31 subunit (271 aa).

Residue Ala-2 is modified to N-acetylalanine. An important for homodimerization and interaction with FBXO7 region spans residues Ala-2–Asn-150. Ser-153 bears the Phosphoserine mark. Arg-205 bears the Omega-N-methylarginine mark. The residue at position 219 (Arg-219) is an Asymmetric dimethylarginine. A disordered region spans residues Ile-222–Leu-271. Position 231 is an omega-N-methylarginine (Arg-231). The segment covering Thr-251–Gly-265 has biased composition (pro residues). Position 252 is a phosphoserine (Ser-252).

This sequence belongs to the proteasome inhibitor PI31 family. Monomer and homodimer. Interacts with FBXO7.

Its subcellular location is the cytoplasm. It is found in the endoplasmic reticulum. Plays an important role in control of proteasome function. Inhibits the hydrolysis of protein and peptide substrates by the 20S proteasome. Also inhibits the activation of the proteasome by the proteasome regulatory proteins PA700 and PA28. This chain is Proteasome inhibitor PI31 subunit (PSMF1), found in Pongo abelii (Sumatran orangutan).